The primary structure comprises 240 residues: Aliphatic sulfonates import ATP-binding protein SsuB 2 (240 aa).

The ABC transporter domain maps to 2–218; it reads VRTRELRRGF…RHSAPEFIHA (217 aa). 34–41 lines the ATP pocket; that stretch reads GRSGSGKS.

Belongs to the ABC transporter superfamily. Aliphatic sulfonates importer (TC 3.A.1.17.2) family. The complex is composed of two ATP-binding proteins (SsuB), two transmembrane proteins (SsuC) and a solute-binding protein (SsuA).

It localises to the cell membrane. It carries out the reaction ATP + H2O + aliphatic sulfonate-[sulfonate-binding protein]Side 1 = ADP + phosphate + aliphatic sulfonateSide 2 + [sulfonate-binding protein]Side 1.. Part of the ABC transporter complex SsuABC involved in aliphatic sulfonates import. Responsible for energy coupling to the transport system. This is Aliphatic sulfonates import ATP-binding protein SsuB 2 from Nocardia farcinica (strain IFM 10152).